An 89-amino-acid chain; its full sequence is Small ribosomal subunit protein bS16 (89 aa).

Belongs to the bacterial ribosomal protein bS16 family.

This chain is Small ribosomal subunit protein bS16, found in Anaplasma marginale (strain Florida).